The following is a 130-amino-acid chain: Ribosome-binding factor A (130 aa).

It belongs to the RbfA family. In terms of assembly, monomer. Binds 30S ribosomal subunits, but not 50S ribosomal subunits or 70S ribosomes.

The protein localises to the cytoplasm. Functionally, one of several proteins that assist in the late maturation steps of the functional core of the 30S ribosomal subunit. Associates with free 30S ribosomal subunits (but not with 30S subunits that are part of 70S ribosomes or polysomes). Required for efficient processing of 16S rRNA. May interact with the 5'-terminal helix region of 16S rRNA. This chain is Ribosome-binding factor A, found in Flavobacterium johnsoniae (strain ATCC 17061 / DSM 2064 / JCM 8514 / BCRC 14874 / CCUG 350202 / NBRC 14942 / NCIMB 11054 / UW101) (Cytophaga johnsonae).